The following is a 162-amino-acid chain: Small ribosomal subunit protein uS19 (162 aa).

The segment covering 1–27 has biased composition (basic residues); the sequence is MAKQKKFSGKGSARSKRKQNRKQVGPR. The interval 1-29 is disordered; it reads MAKQKKFSGKGSARSKRKQNRKQVGPRRR.

It belongs to the universal ribosomal protein uS19 family.

In terms of biological role, protein S19 forms a complex with S13 that binds strongly to the 16S ribosomal RNA. The polypeptide is Small ribosomal subunit protein uS19 (Methanococcus aeolicus (strain ATCC BAA-1280 / DSM 17508 / OCM 812 / Nankai-3)).